A 122-amino-acid polypeptide reads, in one-letter code: Large ribosomal subunit protein uL14c (122 aa).

It belongs to the universal ribosomal protein uL14 family. In terms of assembly, part of the 50S ribosomal subunit.

The protein resides in the plastid. Its subcellular location is the chloroplast. Functionally, binds to 23S rRNA. This is Large ribosomal subunit protein uL14c from Nicotiana sylvestris (Wood tobacco).